We begin with the raw amino-acid sequence, 179 residues long: Peptide deformylase 2 (179 aa).

2 residues coordinate Fe cation: cysteine 101 and histidine 143. Glutamate 144 is an active-site residue. Histidine 147 serves as a coordination point for Fe cation.

It belongs to the polypeptide deformylase family. Requires Fe(2+) as cofactor.

The enzyme catalyses N-terminal N-formyl-L-methionyl-[peptide] + H2O = N-terminal L-methionyl-[peptide] + formate. Its function is as follows. Removes the formyl group from the N-terminal Met of newly synthesized proteins. Requires at least a dipeptide for an efficient rate of reaction. N-terminal L-methionine is a prerequisite for activity but the enzyme has broad specificity at other positions. This chain is Peptide deformylase 2, found in Pseudomonas syringae pv. tomato (strain ATCC BAA-871 / DC3000).